The chain runs to 486 residues: MDMKAHYIDGAMHLGCSEEHFTTYNPANGEPLANVKQANQQDMQAAIESAKRGFAIWSAMTATERSRILLKAVALLRERNDELAALEVADTGKPIQEANCVDIATGADVIEYYAGLAPSMHGEQQPLNESQFFYTRREPLGICAGIGAWNYPIQIAMWKSAPALAAGNAMIFKPSEETPLTALKLAEIYSEAGLPDGVFNVIQGDYRVGQMLTAHPDIAKVSFTGESGTGKVVMGDSAATLKQVTMELGGKSPMIIFDDAKLDDAVSAAMVANFYTQGEVCTHGTRVFVHEGIYDEFVVQLKKRTELLVVGDPLDEQTQIGALISKEHESKVLSAIEQAKASKATLLTGGYKVTENGLASGNFVVPTVFIDCEDDMPHVQQEIFGPVMSVLKFSDEDEVIARANNTDYGLAAGVFTQNLSRAHRVIHQIQAGICWINTWGDSPAEMPVGGYKLSGIGRENGVETLTHYTQTKSVLVHLGDFDSPYA.

Residues Thr23 and Asp90 each coordinate K(+). 147–149 provides a ligand contact to NAD(+); that stretch reads GAW. Lys159 (charge relay system) is an active-site residue. Residues 173–176 and 226–229 contribute to the NAD(+) site; these read KPSE and ESGT. Leu241 serves as a coordination point for K(+). Catalysis depends on Glu247, which acts as the Proton acceptor. The NAD(+) site is built by Gly249, Cys281, and Glu382. The active-site Nucleophile is Cys281. Cys281 carries the post-translational modification Cysteine sulfenic acid (-SOH). The K(+) site is built by Lys452 and Gly455. Glu459 serves as the catalytic Charge relay system.

It belongs to the aldehyde dehydrogenase family. As to quaternary structure, dimer of dimers. Requires K(+) as cofactor.

The enzyme catalyses betaine aldehyde + NAD(+) + H2O = glycine betaine + NADH + 2 H(+). It participates in amine and polyamine biosynthesis; betaine biosynthesis via choline pathway; betaine from betaine aldehyde: step 1/1. Its function is as follows. Involved in the biosynthesis of the osmoprotectant glycine betaine. Catalyzes the irreversible oxidation of betaine aldehyde to the corresponding acid. This is Betaine aldehyde dehydrogenase from Vibrio campbellii (strain ATCC BAA-1116).